The chain runs to 127 residues: Major sperm protein 49 (127 aa).

A2 is modified (N-acetylalanine). Residues 9–126 form the MSP domain; sequence DIQTQPGTKI…RRKNLPIEYN (118 aa).

As to expression, sperm.

The protein localises to the cell projection. Its subcellular location is the pseudopodium. It localises to the cytoplasm. It is found in the cytoskeleton. In terms of biological role, central component in molecular interactions underlying sperm crawling. Forms an extensive filament system that extends from sperm villipoda, along the leading edge of the pseudopod. The protein is Major sperm protein 49 (msp-49) of Caenorhabditis elegans.